Here is a 295-residue protein sequence, read N- to C-terminus: Acetylglutamate kinase (295 aa).

Substrate is bound by residues G66 to G67, R88, and N193.

This sequence belongs to the acetylglutamate kinase family. ArgB subfamily.

The protein resides in the cytoplasm. It catalyses the reaction N-acetyl-L-glutamate + ATP = N-acetyl-L-glutamyl 5-phosphate + ADP. It functions in the pathway amino-acid biosynthesis; L-arginine biosynthesis; N(2)-acetyl-L-ornithine from L-glutamate: step 2/4. Catalyzes the ATP-dependent phosphorylation of N-acetyl-L-glutamate. This chain is Acetylglutamate kinase, found in Afipia carboxidovorans (strain ATCC 49405 / DSM 1227 / KCTC 32145 / OM5) (Oligotropha carboxidovorans).